The sequence spans 79 residues: Sec-independent protein translocase protein TatA (79 aa).

A helical transmembrane segment spans residues 1-21 (MGGFTSIWHWVIVLLVIVLLF). Residues 48-79 (EEEAKNEPKTLDAQVAQTKVHETSEIKSKQES) are disordered. A compositionally biased stretch (basic and acidic residues) spans 66-79 (KVHETSEIKSKQES).

It belongs to the TatA/E family. As to quaternary structure, the Tat system comprises two distinct complexes: a TatABC complex, containing multiple copies of TatA, TatB and TatC subunits, and a separate TatA complex, containing only TatA subunits. Substrates initially bind to the TatABC complex, which probably triggers association of the separate TatA complex to form the active translocon.

It is found in the cell inner membrane. Functionally, part of the twin-arginine translocation (Tat) system that transports large folded proteins containing a characteristic twin-arginine motif in their signal peptide across membranes. TatA could form the protein-conducting channel of the Tat system. This Helicobacter pylori (strain Shi470) protein is Sec-independent protein translocase protein TatA.